A 102-amino-acid chain; its full sequence is Small ribosomal subunit protein uS10 (102 aa).

It belongs to the universal ribosomal protein uS10 family. As to quaternary structure, part of the 30S ribosomal subunit.

In terms of biological role, involved in the binding of tRNA to the ribosomes. This Chelativorans sp. (strain BNC1) protein is Small ribosomal subunit protein uS10.